A 114-amino-acid chain; its full sequence is Large ribosomal subunit protein uL22 (114 aa).

Belongs to the universal ribosomal protein uL22 family. In terms of assembly, part of the 50S ribosomal subunit.

This protein binds specifically to 23S rRNA; its binding is stimulated by other ribosomal proteins, e.g. L4, L17, and L20. It is important during the early stages of 50S assembly. It makes multiple contacts with different domains of the 23S rRNA in the assembled 50S subunit and ribosome. In terms of biological role, the globular domain of the protein is located near the polypeptide exit tunnel on the outside of the subunit, while an extended beta-hairpin is found that lines the wall of the exit tunnel in the center of the 70S ribosome. The chain is Large ribosomal subunit protein uL22 from Desulfitobacterium hafniense (strain DSM 10664 / DCB-2).